The primary structure comprises 899 residues: Alanine--tRNA ligase (899 aa).

The Zn(2+) site is built by histidine 595, histidine 599, cysteine 703, and histidine 707.

It belongs to the class-II aminoacyl-tRNA synthetase family. The cofactor is Zn(2+).

The protein resides in the cytoplasm. The enzyme catalyses tRNA(Ala) + L-alanine + ATP = L-alanyl-tRNA(Ala) + AMP + diphosphate. Catalyzes the attachment of alanine to tRNA(Ala) in a two-step reaction: alanine is first activated by ATP to form Ala-AMP and then transferred to the acceptor end of tRNA(Ala). Also edits incorrectly charged Ser-tRNA(Ala) and Gly-tRNA(Ala) via its editing domain. This chain is Alanine--tRNA ligase, found in Caldivirga maquilingensis (strain ATCC 700844 / DSM 13496 / JCM 10307 / IC-167).